We begin with the raw amino-acid sequence, 528 residues long: MQSPVFVMNTNGNRQVGHKAQMSNIQAAKAVADVIRTCLGPRAMLKMLLDPVGSVLLTNDGHAILREIEVAHPAAKSMIELARTQDEEVGDGTTSVIILAGEILAAASPLLDRKIHPVVMIRSFKQALEDALSIIDEITLPVNVDDNAEMFRLIRTCIGTKLVARWSDLMCHLALRAVRTVASTSNGRMEIDIKRYARVEKVPGGEIESSCVLDGVMLNKDVTHPKMRRRIENPRIVLLDCPLEYRKGESQTNIEISKDTDWNRILEIEEEQVKRMCDYIIAVKPDLVITEKGVSDLAQHYLLKANITALRRTRKSDNNRIARACGANIVNRLEDLREKDVGTGCGLFYIDKLGDEYYTFLTGCKNPKACTILLRGPSKDIINEVERNLQDAMAVARNVFFHPKLSPGGGATEMAVSVRLAEKARSIEGVAQWPYRAVADAIEIIPRTLVQNCGANPIKALTELRAKHAEGQHSFGIDGETGRVVDMHEYGVWEPEAVKLQSIKTAIESACLLLRVDDIVSGVRKHSE.

Serine 250 carries the post-translational modification Phosphoserine. Cysteines 364 and 370 form a disulfide.

This sequence belongs to the TCP-1 chaperonin family. As to quaternary structure, heterooligomeric complex of about 850 to 900 kDa that forms two stacked rings, 12 to 16 nm in diameter.

The protein resides in the cytoplasm. In terms of biological role, molecular chaperone; assists the folding of proteins upon ATP hydrolysis. Known to play a role, in vitro, in the folding of actin and tubulin. The chain is T-complex protein 1 subunit gamma (cct3) from Schizosaccharomyces pombe (strain 972 / ATCC 24843) (Fission yeast).